Reading from the N-terminus, the 453-residue chain is MLYLILFLIAPIYAGVLLPTKPSIDPFYNAPEGFKNATVGDILQFRKTPKSITGGFVPLNVQNSWQFLVRSEDSFGNPNVIVTTVIEPVNADPSKIASYQVSENAARADCAPSYALQFGSDVSTLATQAETYLLAPLLDKGYYVVSPDYEGPKSTFTVGKQSGQAVLNSIRASLKSGKITNIAEDAKVLMWGYSGGSLASGWAAALQPDYAPELSRNLLGVALGGFITNVTATVEATDDTIFAGIAANVLGGIANEYPEFKSILQNDTNKSSIFNKINNHCLTDSFIKYVGARFLTGDNKVFKSGWNIFKNLVVSKIVKDNGLVYQKQLIPTIPVFIYHGSMDQISPILNPKKTYQNWCDAGISSIEFAEDLTNGHFTESIVGAPAALTWIIDRFSNKPPVDGCQHVVRTTNYEYPNVSSSILDYFKAAMDVVAQQGLGPNIQKDQLEIKSNL.

The N-terminal stretch at M1 to A14 is a signal peptide. A glycan (N-linked (GlcNAc...) asparagine) is linked at N36. C110 and C281 form a disulfide bridge. S194 acts as the Charge relay system in catalysis. N-linked (GlcNAc...) asparagine glycosylation is found at N229, N266, and N269. Active-site charge relay system residues include D343 and H376. C359 and C404 form a disulfide bridge. N-linked (GlcNAc...) asparagine glycosylation occurs at N417.

It belongs to the AB hydrolase superfamily. Lipase family. Class Lip subfamily.

The protein resides in the secreted. It carries out the reaction a triacylglycerol + H2O = a diacylglycerol + a fatty acid + H(+). In terms of biological role, secreted lipase that is able to hydrolyze both the neutral triacylglycerols and the monopalmitate ester Tween 40, allowing the use of hydrolyzed products as carbon sources. Has broad lipolytic activity, which may be important for colonization and subsequent infection, therefore contributing to the persistence and virulence in human tissue. This chain is Lipase 9, found in Candida albicans (strain SC5314 / ATCC MYA-2876) (Yeast).